A 505-amino-acid polypeptide reads, in one-letter code: MVNKDVKQTTAFGAPVWDDNNVITAGPRGPVLLQSTWFLEKLAAFDRERIPERVVHAKGSGAYGTFTVTKDITKYTKAKIFSKVGKKTECFFRFSTVAGERGSADAVRDPRGFAMKYYTEEGNWDLVGNNTPVFFIRDAIKFPDFIHTQKRDPQTNLPNHDMVWDFWSNVPESLYQVTWVMSDRGIPKSFRHMDGFGSHTFSLINAKGERFWVKFHFHTMQGVKHLTNEEAAEVRKYDPDSNQRDLFNAIARGDFPKWKLSIQVMPEEDAKKYRFHPFDVTKIWYLQDYPLMEVGIVELNKNPENYFAEVEQAAFSPANVVPGIGYSPDRMLQGRLFSYGDTHRYRLGVNYPQIPVNKPRCPFHSSSRDGYMQNGYYGSLQNYTPSSLPGYKEDKSARDPKFNLAHIEKEFEVWNWDYRADDSDYYTQPGDYYRSLPADEKERLHDTIGESLAHVTHKEIVDKQLEHFKKADPKYAEGVKKALEKHQKMMKDMHGKDMHHTKKKK.

Catalysis depends on residues His-56 and Asn-129. Heme is bound at residue Tyr-339.

The protein belongs to the catalase family. Heme is required as a cofactor.

The protein localises to the cytoplasm. The catalysed reaction is 2 H2O2 = O2 + 2 H2O. Functionally, decomposes hydrogen peroxide into water and oxygen; serves to protect cells from the toxic effects of hydrogen peroxide. The sequence is that of Catalase (katA) from Helicobacter pylori (strain ATCC 700392 / 26695) (Campylobacter pylori).